A 56-amino-acid chain; its full sequence is uncharacterized protein (56 aa).

The helical transmembrane segment at 30 to 52 threads the bilayer; that stretch reads IKIGIICVIITWAIFSINHHHTI.

It localises to the membrane. This is an uncharacterized protein from Dictyostelium discoideum (Social amoeba).